Reading from the N-terminus, the 83-residue chain is Cytochrome b559 subunit alpha (83 aa).

A helical transmembrane segment spans residues 21-35 (VIHSITIPSLFIAGW). Residue His-23 coordinates heme.

This sequence belongs to the PsbE/PsbF family. In terms of assembly, heterodimer of an alpha subunit and a beta subunit. PSII is composed of 1 copy each of membrane proteins PsbA, PsbB, PsbC, PsbD, PsbE, PsbF, PsbH, PsbI, PsbJ, PsbK, PsbL, PsbM, PsbT, PsbX, PsbY, PsbZ, Psb30/Ycf12, at least 3 peripheral proteins of the oxygen-evolving complex and a large number of cofactors. It forms dimeric complexes. Requires heme b as cofactor.

Its subcellular location is the plastid. The protein localises to the chloroplast thylakoid membrane. In terms of biological role, this b-type cytochrome is tightly associated with the reaction center of photosystem II (PSII). PSII is a light-driven water:plastoquinone oxidoreductase that uses light energy to abstract electrons from H(2)O, generating O(2) and a proton gradient subsequently used for ATP formation. It consists of a core antenna complex that captures photons, and an electron transfer chain that converts photonic excitation into a charge separation. The sequence is that of Cytochrome b559 subunit alpha from Anthoceros angustus (Hornwort).